The following is a 428-amino-acid chain: Enolase (428 aa).

Q163 is a binding site for (2R)-2-phosphoglycerate. The active-site Proton donor is E205. Residues D242, E284, and D311 each coordinate Mg(2+). K336, R365, S366, and K387 together coordinate (2R)-2-phosphoglycerate. The active-site Proton acceptor is K336.

The protein belongs to the enolase family. Requires Mg(2+) as cofactor.

Its subcellular location is the cytoplasm. It is found in the secreted. The protein localises to the cell surface. The enzyme catalyses (2R)-2-phosphoglycerate = phosphoenolpyruvate + H2O. Its pathway is carbohydrate degradation; glycolysis; pyruvate from D-glyceraldehyde 3-phosphate: step 4/5. In terms of biological role, catalyzes the reversible conversion of 2-phosphoglycerate (2-PG) into phosphoenolpyruvate (PEP). It is essential for the degradation of carbohydrates via glycolysis. The chain is Enolase from Tropheryma whipplei (strain TW08/27) (Whipple's bacillus).